The following is a 196-amino-acid chain: Dephospho-CoA kinase (196 aa).

A DPCK domain is found at 5–196 (IIGLTGGIAT…QVDIALNFEL (192 aa)). Residue 13 to 18 (ATGKTT) participates in ATP binding.

Belongs to the CoaE family.

It is found in the cytoplasm. The enzyme catalyses 3'-dephospho-CoA + ATP = ADP + CoA + H(+). It functions in the pathway cofactor biosynthesis; coenzyme A biosynthesis; CoA from (R)-pantothenate: step 5/5. Its function is as follows. Catalyzes the phosphorylation of the 3'-hydroxyl group of dephosphocoenzyme A to form coenzyme A. The polypeptide is Dephospho-CoA kinase (Trichormus variabilis (strain ATCC 29413 / PCC 7937) (Anabaena variabilis)).